The following is a 187-amino-acid chain: Peptidyl-tRNA hydrolase (187 aa).

TRNA is bound at residue Tyr15. The active-site Proton acceptor is the His20. 3 residues coordinate tRNA: Phe65, Asn67, and Asn113.

The protein belongs to the PTH family. In terms of assembly, monomer.

The protein resides in the cytoplasm. The enzyme catalyses an N-acyl-L-alpha-aminoacyl-tRNA + H2O = an N-acyl-L-amino acid + a tRNA + H(+). In terms of biological role, hydrolyzes ribosome-free peptidyl-tRNAs (with 1 or more amino acids incorporated), which drop off the ribosome during protein synthesis, or as a result of ribosome stalling. Its function is as follows. Catalyzes the release of premature peptidyl moieties from peptidyl-tRNA molecules trapped in stalled 50S ribosomal subunits, and thus maintains levels of free tRNAs and 50S ribosomes. The chain is Peptidyl-tRNA hydrolase from Elusimicrobium minutum (strain Pei191).